The primary structure comprises 521 residues: uncharacterized protein (521 aa).

Residues 14–41 adopt a coiled-coil conformation; that stretch reads QFQQMQHQMQQQQQQQMQQQQQQQQQQQ. 3 stretches are compositionally biased toward low complexity: residues 238–266, 275–353, and 423–482; these read LSGS…TSSS, SSTS…NNNN, and PRLS…PNNP. Disordered regions lie at residues 238-357 and 413-491; these read LSGS…ISGF and TAVA…SNNG.

This is an uncharacterized protein from Dictyostelium discoideum (Social amoeba).